The chain runs to 99 residues: Large ribosomal subunit protein uL23 (99 aa).

Belongs to the universal ribosomal protein uL23 family. Part of the 50S ribosomal subunit. Contacts protein L29, and trigger factor when it is bound to the ribosome.

One of the early assembly proteins it binds 23S rRNA. One of the proteins that surrounds the polypeptide exit tunnel on the outside of the ribosome. Forms the main docking site for trigger factor binding to the ribosome. The polypeptide is Large ribosomal subunit protein uL23 (Rhodopseudomonas palustris (strain BisB5)).